A 999-amino-acid polypeptide reads, in one-letter code: Protein Smaug (999 aa).

Polar residues predominate over residues 1 to 36 (MKYATGTDNAMTSGISGQTNNSNSASNEMQPTTSTP). Disordered stretches follow at residues 1-69 (MKYA…QSQP) and 329-349 (LCPASGSRSSRTNDWQTIAPP). 2 stretches are compositionally biased toward low complexity: residues 44–69 (TSTATTTATYANGNPNSNANPSQSQP) and 329–338 (LCPASGSRSS). Phosphoserine occurs at positions 564 and 575. The tract at residues 583-763 (EFKPNYIKFH…KDLKFKLSKM (181 aa)) is interaction with cup. An SAM domain is found at 600–654 (GIGLWLKSLRLHKYIELFKNMTYEEMLLITEDFLQSVGVTKGASHKLALCIDKLK). Disordered stretches follow at residues 773–892 (HVKP…MQQM) and 955–977 (QQSQQQQQQRKLSGGVSSAEQQP). Composition is skewed to polar residues over residues 801-822 (KNGSNDRINNRKNSNDMLNFSL) and 854-864 (HQPQYKSSSYP). Ser-972 bears the Phosphoserine mark.

Belongs to the SMAUG family. Interacts with oskar (osk). Binds to the 3'-UTR of nanos (nos). Interacts with cup, which in turn recruits eIF4-E, leading to an indirect interaction between smg and eIF4-E that prevents mRNA translation. Forms a complex with aub, twin, AGO3, nanos mRNA and piRNAs that targets the nanos 3'-untranslated region, in early embryos. As to expression, at syncytial blastoderm, it is located throughout the bulk cytoplasm and pole plasm. By the time of cellularization, it concentrates at the posterior pole.

It localises to the cytoplasm. Functionally, translation regulator that binds to the 3'-UTR of specific mRNAs such as nanos (nos) and prevents their translation. Prevents translation of unlocalized nanos in the bulk cytoplasm via the recruitment of cup. The polypeptide is Protein Smaug (smg) (Drosophila melanogaster (Fruit fly)).